A 461-amino-acid chain; its full sequence is Integrator complex subunit 12 (461 aa).

The disordered stretch occupies residues glycine 42–valine 131. Residue lysine 68 forms a Glycyl lysine isopeptide (Lys-Gly) (interchain with G-Cter in SUMO2) linkage. Over residues threonine 88–threonine 124 the composition is skewed to basic and acidic residues. Phosphoserine is present on serine 127. The PHD-type zinc-finger motif lies at glycine 158–glutamine 214. Lysine 253 is covalently cross-linked (Glycyl lysine isopeptide (Lys-Gly) (interchain with G-Cter in SUMO2)). Polar residues predominate over residues alanine 302 to lysine 328. The tract at residues alanine 302–alanine 443 is disordered. Composition is skewed to low complexity over residues glycine 348 to valine 357 and valine 381 to serine 436.

This sequence belongs to the Integrator subunit 12 family. Component of the Integrator complex, composed of core subunits INTS1, INTS2, INTS3, INTS4, INTS5, INTS6, INTS7, INTS8, INTS9/RC74, INTS10, INTS11/CPSF3L, INTS12, INTS13, INTS14 and INTS15. The core complex associates with protein phosphatase 2A subunits PPP2CA and PPP2R1A, to form the Integrator-PP2A (INTAC) complex. Dephosphorylated at Ser-127 by the PNUTS-PP1 complex, promoting RNA polymerase II transcription pause-release.

The protein localises to the nucleus. Component of the integrator complex, a multiprotein complex that terminates RNA polymerase II (Pol II) transcription in the promoter-proximal region of genes. The integrator complex provides a quality checkpoint during transcription elongation by driving premature transcription termination of transcripts that are unfavorably configured for transcriptional elongation: the complex terminates transcription by (1) catalyzing dephosphorylation of the C-terminal domain (CTD) of Pol II subunit POLR2A/RPB1 and SUPT5H/SPT5, (2) degrading the exiting nascent RNA transcript via endonuclease activity and (3) promoting the release of Pol II from bound DNA. The integrator complex is also involved in terminating the synthesis of non-coding Pol II transcripts, such as enhancer RNAs (eRNAs), small nuclear RNAs (snRNAs), telomerase RNAs and long non-coding RNAs (lncRNAs). Mediates recruitment of cytoplasmic dynein to the nuclear envelope, probably as component of the integrator complex. The polypeptide is Integrator complex subunit 12 (Ints12) (Mus musculus (Mouse)).